The following is a 627-amino-acid chain: Transketolase-like protein 2 (627 aa).

His-39 contacts substrate. Residues Ser-42, His-79, and 125–127 (GSL) contribute to the thiamine diphosphate site. Position 157 (Asp-157) interacts with Mg(2+). Thiamine diphosphate is bound by residues Gly-158 and Asn-187. Mg(2+) contacts are provided by Asn-187 and Leu-189. Positions 249 and 263 each coordinate thiamine diphosphate. The substrate site is built by His-263, Arg-323, and Ser-350. 2 residues coordinate thiamine diphosphate: Glu-371 and Phe-397. Glu-371 functions as the Proton donor in the catalytic mechanism. 2 residues coordinate substrate: His-421 and Asp-429. Residue Gln-433 participates in thiamine diphosphate binding. Arg-479 contacts substrate.

The protein belongs to the transketolase family. Homodimer. Requires Mg(2+) as cofactor. It depends on Ca(2+) as a cofactor. Mn(2+) serves as cofactor. Co(2+) is required as a cofactor. The cofactor is thiamine diphosphate.

It catalyses the reaction D-sedoheptulose 7-phosphate + D-glyceraldehyde 3-phosphate = aldehydo-D-ribose 5-phosphate + D-xylulose 5-phosphate. In terms of biological role, plays an essential role in total transketolase activity and cell proliferation in cancer cells; after transfection with anti-TKTL1 siRNA, total transketolase activity dramatically decreases and proliferation was significantly inhibited in cancer cells. Plays a pivotal role in carcinogenesis. The chain is Transketolase-like protein 2 (Tktl2) from Mus musculus (Mouse).